Reading from the N-terminus, the 940-residue chain is Serine/threonine-protein phosphatase 1 regulatory subunit 10 (940 aa).

Residues 1 to 348 are interaction with TOX4; it reads MGSGPIDPKE…EPAPPSEAME (348 aa). The TFIIS N-terminal domain maps to 73 to 147; sequence KLLNNWLTYS…SDWMAVIRSQ (75 aa). Disordered regions lie at residues 147–210, 248–270, 304–400, and 534–557; these read QSST…KFRS, NVAA…NTTP, KIKK…KSVT, and VETL…LPPV. Basic and acidic residues-rich tracts occupy residues 153–166 and 174–196; these read AEKD…EGKS and PLTE…EKPK. A Glycyl lysine isopeptide (Lys-Gly) (interchain with G-Cter in SUMO2) cross-link involves residue Lys179. Thr256 carries the phosphothreonine modification. A Glycyl lysine isopeptide (Lys-Gly) (interchain with G-Cter in SUMO2) cross-link involves residue Lys262. Ser313 carries the post-translational modification Phosphoserine. Over residues 325–336 the composition is skewed to low complexity; that stretch reads KTSTEPSTAKPS. A necessary for interaction with PPP1CA region spans residues 357 to 433; the sequence is PPVEVPELMD…NKIKDFGEAA (77 aa). Ser382 carries the post-translational modification Phosphoserine. The necessary for interaction with PPP1CC stretch occupies residues 393-408; sequence GRKRKSVTWPEEGKLR. The short motif at 394 to 423 is the PP1-binding motif element; sequence RKRKSVTWPEEGKLREYFYFELDETERVNV. A Phosphoserine; by PKA modification is found at Ser398. The interaction with WDR82 stretch occupies residues 418–619; sequence TERVNVNKIK…IKQMLVPHGL (202 aa). The segment covering 540-551 has biased composition (gly residues); it reads GGSGGSPDGAGG. 2 positions are modified to phosphoserine: Ser545 and Ser591. Residues 617–905 form a disordered region; the sequence is HGLLGPGPIA…HDGGHSHGGD (289 aa). Pro residues predominate over residues 644–655; sequence PPGPGGPMPGPH. Arg665 is modified (omega-N-methylarginine). A compositionally biased stretch (low complexity) spans 676-690; it reads GDPFWDGPGDPMRGG. 2 positions are modified to omega-N-methylarginine: Arg693 and Arg738. Composition is skewed to gly residues over residues 725–763 and 789–844; these read ARGG…GMGN and GSMG…GSGG. Composition is skewed to basic and acidic residues over residues 861 to 886 and 894 to 903; these read PHDV…HDGP and RGHDGGHSHG. The segment at 906 to 934 adopts a C3H1-type zinc-finger fold; that stretch reads MSNRPVCRHFMMKGNCRYENNCAFYHPGV.

Component of the PNUTS-PP1 complex (also named PTW/PP1 complex), composed of PPP1R10/PNUTS, TOX4, WDR82, and PPP1CA (or PPP1CB or PPP1CC). Phosphorylated on Ser-398 by PKA within the region necessary for interaction with PPP1CA.

It is found in the nucleus. The protein resides in the chromosome. Substrate-recognition component of the PNUTS-PP1 protein phosphatase complex, a protein phosphatase 1 (PP1) complex that promotes RNA polymerase II transcription pause-release, allowing transcription elongation. Promoter-proximal pausing by RNA polymerase II is a transcription halt following transcription initiation but prior to elongation, which acts as a checkpoint to control that transcripts are favorably configured for transcriptional elongation. The PNUTS-PP1 complex mediates the release of RNA polymerase II from promoter-proximal region of genes by catalyzing dephosphorylation of proteins involved in transcription, such as AFF4, CDK9, MEPCE, INTS12, NCBP1, POLR2M/GDOWN1 and SUPT6H. The PNUTS-PP1 complex also regulates RNA polymerase II transcription termination by mediating dephosphorylation of SUPT5H in termination zones downstream of poly(A) sites, thereby promoting deceleration of RNA polymerase II transcription. PNUTS-PP1 complex is also involved in the response to replication stress by mediating dephosphorylation of POLR2A at 'Ser-5' of the CTD, promoting RNA polymerase II degradation. The PNUTS-PP1 complex also plays a role in the control of chromatin structure and cell cycle progression during the transition from mitosis into interphase. PNUTS-PP1 complex mediates dephosphorylation of MYC, promoting MYC stability by preventing MYC ubiquitination by the SCF(FBXW7) complex. In addition to acts as a substrate-recognition component, PPP1R10/PNUTS also acts as a nuclear targeting subunit for the PNUTS-PP1 complex. In some context, PPP1R10/PNUTS also acts as an inhibitor of protein phosphatase 1 (PP1) activity by preventing access to substrates, such as RB. The protein is Serine/threonine-protein phosphatase 1 regulatory subunit 10 (PPP1R10) of Pan troglodytes (Chimpanzee).